Consider the following 190-residue polypeptide: ADP-ribosylation factor-like protein 6 (190 aa).

A lipid anchor (N-myristoyl glycine) is attached at Gly-2. GTP-binding positions include 24-31 (GLDNSGKT), 69-73 (DMAGQ), and 130-133 (NKMD).

The protein belongs to the small GTPase superfamily. Arf family. In terms of tissue distribution, specifically expressed in ciliated cells.

The protein resides in the cytoplasm. This Caenorhabditis elegans protein is ADP-ribosylation factor-like protein 6.